A 222-amino-acid chain; its full sequence is U-scoloptoxin(11)-Sm5a (222 aa).

This sequence belongs to the scoloptoxin-11 family. Contains 8 disulfide bonds. As to expression, expressed by the venom gland.

The protein resides in the secreted. In Scolopendra morsitans (Tanzanian blue ringleg centipede), this protein is U-scoloptoxin(11)-Sm5a.